The chain runs to 217 residues: Adapter protein MecA (217 aa).

It belongs to the MecA family. In terms of assembly, homodimer.

Enables the recognition and targeting of unfolded and aggregated proteins to the ClpC protease or to other proteins involved in proteolysis. In Listeria innocua serovar 6a (strain ATCC BAA-680 / CLIP 11262), this protein is Adapter protein MecA.